The primary structure comprises 128 residues: Gastrotropin (128 aa).

A2 bears the N-acetylalanine mark.

It belongs to the calycin superfamily. Fatty-acid binding protein (FABP) family. Predominantly expressed in ileum; also expressed in ovary.

The protein resides in the cytoplasm. Its subcellular location is the membrane. Its function is as follows. Binds to bile acids and is involved in enterohepatic bile acid metabolism. Required for efficient apical to basolateral transport of conjugated bile acids in ileal enterocytes. Stimulates gastric acid and pepsinogen secretion. In Rattus norvegicus (Rat), this protein is Gastrotropin (Fabp6).